Reading from the N-terminus, the 94-residue chain is ESAT-6-like protein EsxI (94 aa).

This sequence belongs to the WXG100 family. ESAT-6 subfamily.

Its subcellular location is the secreted. This Mycobacterium tuberculosis (strain ATCC 25618 / H37Rv) protein is ESAT-6-like protein EsxI.